Consider the following 565-residue polypeptide: DNA repair protein RAD7 (565 aa).

2 disordered regions span residues 1-22 (MYRS…PNSA) and 41-68 (WYQR…FTAE). Residues 1 to 200 (MYRSRNRPKR…SKLVFNKLRD (200 aa)) are hydrophilic. Residues 47 to 62 (KKQEDATDEKKGKAED) show a composition bias toward basic and acidic residues. 2 positions are modified to phosphoserine: S64 and S85. The tract at residues 105 to 137 (ADSDEEEYETSHISDTPVSLSSANDRESLTKKR) is disordered. The span at 115 to 127 (SHISDTPVSLSSA) shows a compositional bias: polar residues.

The protein to S.pombe SpCC613.14. In terms of assembly, component of the global genome repair (GGR) complex composed of at least ABF1, RAD7 and RAD16. Interacts with ELC1.

Its function is as follows. Component of the global genome repair (GGR) complex which promotes global genome nucleotide excision repair (GG-NER) which removes DNA damage from nontranscribing DNA. This protein is one of 10 proteins (RAD1, 2,3,4,7,10,14, 16,23 and MMS19) involved in excision repair of DNA damaged with UV light, bulky adducts, or cross-linking agents. The sequence is that of DNA repair protein RAD7 (RAD7) from Saccharomyces cerevisiae (strain ATCC 204508 / S288c) (Baker's yeast).